Reading from the N-terminus, the 440-residue chain is Polyprenol-phosphate-mannose-dependent alpha-(1-2)-phosphatidylinositol mannoside mannosyltransferase (440 aa).

The next 11 helical transmembrane spans lie at 15–35 (LAPT…VLWV), 87–107 (LAAI…SSAI), 109–129 (ATTL…LDVW), 144–161 (AWLA…LEPI), 164–184 (NFEF…DCVP), 193–213 (LLLG…LYFL), 224–244 (TAAT…SDSV), 281–301 (PRFI…VWAA), 316–336 (APVL…PVSW), 360–380 (VWFT…PITL), and 395–415 (LAGG…GLVS). The interval 419–440 (THTGDAHETDEPLVPLARGEAG) is disordered.

Belongs to the glycosyltransferase 87 family.

It is found in the cell membrane. The protein operates within phospholipid metabolism; phosphatidylinositol metabolism. Functionally, responsible for the addition of alpha-(1-2) mannose branches to the linear mannan core on the biosynthetic pathway to mature Lipoarabinomannan (LAM). This chain is Polyprenol-phosphate-mannose-dependent alpha-(1-2)-phosphatidylinositol mannoside mannosyltransferase, found in Mycolicibacterium smegmatis (strain ATCC 700084 / mc(2)155) (Mycobacterium smegmatis).